A 323-amino-acid chain; its full sequence is Beta-ketoacyl-[acyl-carrier-protein] synthase III (323 aa).

Catalysis depends on residues Cys112 and His248. Residues 249–253 (QANRR) are ACP-binding. Asn278 is a catalytic residue.

The protein belongs to the thiolase-like superfamily. FabH family. Homodimer.

The protein resides in the cytoplasm. The catalysed reaction is malonyl-[ACP] + acetyl-CoA + H(+) = 3-oxobutanoyl-[ACP] + CO2 + CoA. Its pathway is lipid metabolism; fatty acid biosynthesis. Its function is as follows. Catalyzes the condensation reaction of fatty acid synthesis by the addition to an acyl acceptor of two carbons from malonyl-ACP. Catalyzes the first condensation reaction which initiates fatty acid synthesis and may therefore play a role in governing the total rate of fatty acid production. Possesses both acetoacetyl-ACP synthase and acetyl transacylase activities. Its substrate specificity determines the biosynthesis of branched-chain and/or straight-chain of fatty acids. This Streptococcus agalactiae serotype Ia (strain ATCC 27591 / A909 / CDC SS700) protein is Beta-ketoacyl-[acyl-carrier-protein] synthase III.